The chain runs to 507 residues: Histidine ammonia-lyase (507 aa).

A cross-link (5-imidazolinone (Ala-Gly)) is located at residues 142 to 144; that stretch reads ASG. Ser143 is subject to 2,3-didehydroalanine (Ser).

Belongs to the PAL/histidase family. In terms of processing, contains an active site 4-methylidene-imidazol-5-one (MIO), which is formed autocatalytically by cyclization and dehydration of residues Ala-Ser-Gly.

The protein localises to the cytoplasm. It carries out the reaction L-histidine = trans-urocanate + NH4(+). The protein operates within amino-acid degradation; L-histidine degradation into L-glutamate; N-formimidoyl-L-glutamate from L-histidine: step 1/3. The polypeptide is Histidine ammonia-lyase (Symbiobacterium thermophilum (strain DSM 24528 / JCM 14929 / IAM 14863 / T)).